Consider the following 75-residue polypeptide: UPF0235 protein Mflv_3569 (75 aa).

This sequence belongs to the UPF0235 family.

The chain is UPF0235 protein Mflv_3569 from Mycolicibacterium gilvum (strain PYR-GCK) (Mycobacterium gilvum (strain PYR-GCK)).